The primary structure comprises 519 residues: Maturase K (519 aa).

It belongs to the intron maturase 2 family. MatK subfamily.

The protein localises to the plastid. It is found in the chloroplast. Its function is as follows. Usually encoded in the trnK tRNA gene intron. Probably assists in splicing its own and other chloroplast group II introns. The chain is Maturase K from Dioscorea elephantipes (Elephant's foot yam).